We begin with the raw amino-acid sequence, 97 residues long: Small nuclear ribonucleoprotein Sm D3 (97 aa).

One can recognise a Sm domain in the interval 3–75 (LCIKLLHETQ…IRFLIVPDML (73 aa)).

The protein belongs to the snRNP core protein family. In terms of assembly, belongs to the 40S cdc5-associated complex (or cwf complex), a spliceosome sub-complex reminiscent of a late-stage spliceosome composed of the U2, U5 and U6 snRNAs and at least brr2, cdc5, cwf2/prp3, cwf3/syf1, cwf4/syf3, cwf5/ecm2, spp42/cwf6, cwf7/spf27, cwf8, cwf9, cwf10, cwf11, cwf12, prp45/cwf13, cwf14, cwf15, cwf16, cwf17, cwf18, cwf19, cwf20, cwf21, cwf22, cwf23, cwf24, cwf25, cwf26, cyp7/cwf27, cwf28, cwf29/ist3, lea1, msl1, prp5/cwf1, prp10, prp12/sap130, prp17, prp22, sap61, sap62, sap114, sap145, slu7, smb1, smd1, smd3, smf1, smg1 and syf2. Interacts with saf5; the interaction is direct.

Its subcellular location is the nucleus. The protein resides in the cytoplasm. It localises to the cytosol. Plays a role in pre-mRNA splicing as a core component of the spliceosomal U1, U2, U4 and U5 small nuclear ribonucleoproteins (snRNPs), the building blocks of the spliceosome. This chain is Small nuclear ribonucleoprotein Sm D3 (smd3), found in Schizosaccharomyces pombe (strain 972 / ATCC 24843) (Fission yeast).